The chain runs to 206 residues: Glycerol-3-phosphate acyltransferase (206 aa).

5 helical membrane passes run 14-34 (IALA…GLIL), 67-87 (ATLL…GYFL), 91-111 (AAII…WIGF), 124-144 (LLGV…AVAV), and 148-168 (YSSL…LILG).

This sequence belongs to the PlsY family. Probably interacts with PlsX.

The protein resides in the cell inner membrane. It carries out the reaction an acyl phosphate + sn-glycerol 3-phosphate = a 1-acyl-sn-glycero-3-phosphate + phosphate. It functions in the pathway lipid metabolism; phospholipid metabolism. Functionally, catalyzes the transfer of an acyl group from acyl-phosphate (acyl-PO(4)) to glycerol-3-phosphate (G3P) to form lysophosphatidic acid (LPA). This enzyme utilizes acyl-phosphate as fatty acyl donor, but not acyl-CoA or acyl-ACP. This is Glycerol-3-phosphate acyltransferase from Rhizobium etli (strain ATCC 51251 / DSM 11541 / JCM 21823 / NBRC 15573 / CFN 42).